Reading from the N-terminus, the 398-residue chain is Acetate kinase (398 aa).

Asn-7 contributes to the Mg(2+) binding site. An ATP-binding site is contributed by Lys-14. Arg-92 lines the substrate pocket. Residue Asp-149 is the Proton donor/acceptor of the active site. ATP-binding positions include His-208–Gly-212, Asp-283–Arg-285, and Gly-331–Asn-335. Glu-385 is a Mg(2+) binding site.

This sequence belongs to the acetokinase family. Homodimer. It depends on Mg(2+) as a cofactor. The cofactor is Mn(2+).

Its subcellular location is the cytoplasm. The enzyme catalyses acetate + ATP = acetyl phosphate + ADP. It functions in the pathway metabolic intermediate biosynthesis; acetyl-CoA biosynthesis; acetyl-CoA from acetate: step 1/2. Catalyzes the formation of acetyl phosphate from acetate and ATP. Can also catalyze the reverse reaction. This is Acetate kinase from Fusobacterium nucleatum subsp. nucleatum (strain ATCC 25586 / DSM 15643 / BCRC 10681 / CIP 101130 / JCM 8532 / KCTC 2640 / LMG 13131 / VPI 4355).